We begin with the raw amino-acid sequence, 404 residues long: uncharacterized protein (404 aa).

[4Fe-4S] cluster-binding residues include Cys-69, Cys-75, Cys-78, and Cys-166. Residues Gln-226, Tyr-253, Glu-274, and Asp-334 each coordinate S-adenosyl-L-methionine. Cys-361 (nucleophile) is an active-site residue.

This sequence belongs to the class I-like SAM-binding methyltransferase superfamily. RNA M5U methyltransferase family.

This is an uncharacterized protein from Treponema denticola (strain ATCC 35405 / DSM 14222 / CIP 103919 / JCM 8153 / KCTC 15104).